We begin with the raw amino-acid sequence, 176 residues long: NAD(P)H-quinone oxidoreductase subunit 6, chloroplastic (176 aa).

Transmembrane regions (helical) follow at residues 10-30 (FLLV…VLLT), 32-52 (PIYS…FYIL), 61-81 (AQLL…VMFM), 95-115 (VGSG…ITII), and 152-172 (FFLP…GAIA).

Belongs to the complex I subunit 6 family. NDH is composed of at least 16 different subunits, 5 of which are encoded in the nucleus.

It is found in the plastid. The protein resides in the chloroplast thylakoid membrane. The catalysed reaction is a plastoquinone + NADH + (n+1) H(+)(in) = a plastoquinol + NAD(+) + n H(+)(out). It catalyses the reaction a plastoquinone + NADPH + (n+1) H(+)(in) = a plastoquinol + NADP(+) + n H(+)(out). Functionally, NDH shuttles electrons from NAD(P)H:plastoquinone, via FMN and iron-sulfur (Fe-S) centers, to quinones in the photosynthetic chain and possibly in a chloroplast respiratory chain. The immediate electron acceptor for the enzyme in this species is believed to be plastoquinone. Couples the redox reaction to proton translocation, and thus conserves the redox energy in a proton gradient. The protein is NAD(P)H-quinone oxidoreductase subunit 6, chloroplastic (ndhG) of Manihot esculenta (Cassava).